Reading from the N-terminus, the 494-residue chain is GTPase Der (494 aa).

EngA-type G domains are found at residues 3–166 (PVIA…MDAE) and 207–380 (IKLA…DCST). GTP contacts are provided by residues 9-16 (GRPNVGKS), 56-60 (DTGGI), 118-121 (NKTD), 213-220 (GRPNVGKS), 260-264 (DTAGV), and 325-328 (NKWD). A KH-like domain is found at 381–465 (KRVGTSLLTR…PIRIQFKEGE (85 aa)).

Belongs to the TRAFAC class TrmE-Era-EngA-EngB-Septin-like GTPase superfamily. EngA (Der) GTPase family. As to quaternary structure, associates with the 50S ribosomal subunit.

GTPase that plays an essential role in the late steps of ribosome biogenesis. This chain is GTPase Der, found in Yersinia enterocolitica serotype O:8 / biotype 1B (strain NCTC 13174 / 8081).